Consider the following 186-residue polypeptide: Auxin-responsive protein IAA4 (186 aa).

The EAR-like (transcriptional repression) motif lies at 18 to 22; sequence LRLGL. Residues 25 to 62 form a disordered region; it reads TEETVSCGKSNKRVLPEATEKEIESTGKTETASPPKAQ. Over residues 38–51 the composition is skewed to basic and acidic residues; the sequence is VLPEATEKEIESTG. The PB1 domain maps to 88–175; it reads GNYVKVSMDG…SCKRLRIMKG (88 aa).

Belongs to the Aux/IAA family. Homodimers and heterodimers. Interacts with TPL. In terms of tissue distribution, preferentially expressed in stems, leaves and flowers.

The protein localises to the nucleus. Aux/IAA proteins are short-lived transcriptional factors that function as repressors of early auxin response genes at low auxin concentrations. Repression is thought to result from the interaction with auxin response factors (ARFs), proteins that bind to the auxin-responsive promoter element (AuxRE). Formation of heterodimers with ARF proteins may alter their ability to modulate early auxin response genes expression. This chain is Auxin-responsive protein IAA4 (IAA4), found in Arabidopsis thaliana (Mouse-ear cress).